Reading from the N-terminus, the 367-residue chain is Glutamate 5-kinase (367 aa).

Lys-10 contacts ATP. Substrate is bound by residues Ser-50, Asp-137, and Asn-149. Residues 169–170 (TD) and 211–217 (TGGMATK) each bind ATP. The PUA domain occupies 275–353 (AGEITVDDGA…QQISEILGYE (79 aa)).

It belongs to the glutamate 5-kinase family.

It localises to the cytoplasm. The catalysed reaction is L-glutamate + ATP = L-glutamyl 5-phosphate + ADP. It functions in the pathway amino-acid biosynthesis; L-proline biosynthesis; L-glutamate 5-semialdehyde from L-glutamate: step 1/2. In terms of biological role, catalyzes the transfer of a phosphate group to glutamate to form L-glutamate 5-phosphate. This Yersinia enterocolitica serotype O:8 / biotype 1B (strain NCTC 13174 / 8081) protein is Glutamate 5-kinase.